Consider the following 258-residue polypeptide: uncharacterized protein (258 aa).

6 consecutive transmembrane segments (helical) span residues 24-44 (IPLF…VNIF), 70-90 (PLVH…FLLM), 100-120 (LCTI…AYLI), 130-150 (VYVG…LNLF), 157-177 (LLNL…VLGL), and 181-201 (FSIT…FSFA). Residue His188 is part of the active site.

The protein belongs to the peptidase S54 family.

Its subcellular location is the golgi apparatus membrane. This is an uncharacterized protein from Schizosaccharomyces pombe (strain 972 / ATCC 24843) (Fission yeast).